The following is a 303-amino-acid chain: CDAN1-interacting nuclease 1 (303 aa).

It localises to the nucleus. The protein localises to the cytoplasm. May play a role in erythroid cell differentiation. The sequence is that of CDAN1-interacting nuclease 1 from Xenopus laevis (African clawed frog).